The chain runs to 255 residues: Kallikrein-15 (255 aa).

The N-terminal stretch at 1–15 (MWLLLPLSFLLTSTA) is a signal peptide. A propeptide spans 16 to 20 (QDGGK) (activation peptide). The tract at residues 21–253 (LLEGEECAPH…YVKWIRETMK (233 aa)) is serine protease. Cysteines 46 and 62 form a disulfide. Residues histidine 61 and aspartate 105 each act as charge relay system in the active site. 3 disulfides stabilise this stretch: cysteine 137–cysteine 214, cysteine 179–cysteine 193, and cysteine 204–cysteine 229. The N-linked (GlcNAc...) asparagine glycan is linked to asparagine 170. The active-site Charge relay system is the serine 208. N-linked (GlcNAc...) asparagine glycosylation is present at asparagine 231.

Belongs to the peptidase S1 family. Kallikrein subfamily.

Its subcellular location is the secreted. Functionally, protease whose physiological substrate is not yet known. This Saguinus oedipus (Cotton-top tamarin) protein is Kallikrein-15 (KLK15).